A 197-amino-acid polypeptide reads, in one-letter code: Probable nicotinate-nucleotide adenylyltransferase (197 aa).

The protein belongs to the NadD family.

It catalyses the reaction nicotinate beta-D-ribonucleotide + ATP + H(+) = deamido-NAD(+) + diphosphate. It functions in the pathway cofactor biosynthesis; NAD(+) biosynthesis; deamido-NAD(+) from nicotinate D-ribonucleotide: step 1/1. In terms of biological role, catalyzes the reversible adenylation of nicotinate mononucleotide (NaMN) to nicotinic acid adenine dinucleotide (NaAD). The sequence is that of Probable nicotinate-nucleotide adenylyltransferase from Leptospira borgpetersenii serovar Hardjo-bovis (strain JB197).